The sequence spans 194 residues: MAHGAKYRVPFRRRREGKTNFRLRLKLLLSRTPRLVARKSLNNIVAQIVEYDEVGDKIVVSAHSKEIVKLGYKGHCGNVPAAYLTGLLLGKKALKEGNEEAILDLGLNSATKGAAVLAILKGAVDAGMDIPHSEEILPGEDRINGSHVKEYAELLKVEDEEKYNKQFSKYLKNGLNPEDLPEHFEEIKEKILSL.

The protein belongs to the universal ribosomal protein uL18 family. In terms of assembly, part of the 50S ribosomal subunit. Contacts the 5S and 23S rRNAs.

Its function is as follows. This is one of the proteins that bind and probably mediate the attachment of the 5S RNA into the large ribosomal subunit, where it forms part of the central protuberance. The chain is Large ribosomal subunit protein uL18 from Methanococcus aeolicus (strain ATCC BAA-1280 / DSM 17508 / OCM 812 / Nankai-3).